A 150-amino-acid chain; its full sequence is Large ribosomal subunit protein bL9 (150 aa).

It belongs to the bacterial ribosomal protein bL9 family.

In terms of biological role, binds to the 23S rRNA. This is Large ribosomal subunit protein bL9 from Burkholderia cenocepacia (strain HI2424).